The chain runs to 1034 residues: MGKAENYELYSVELGSGPGGDMTAKMSKKKAGGGGGKKKEKLENMKKEMEINDHQLSVSELEQKYQTSATKGLKASLAAELLLRDGPNALRPPRGTPEYVKFARQLAGGLQCLMWVAAAICLIAFAIQASEGDLTTDDNLYLAVALIAVVVVTGCFGYYQEFKSTNIIASFKNLVPQQATVIRDGDKFQINADQLVVGDLVEMKGGDRVPADIRILSAQGCKVDNSSLTGESEPQTRSPECTHESPLETRNIAFFSTMCLEGTAQGLVVSTGDRTIIGRIASLASGVENEKTPIAIEIEHFVDIIAGLAILFGATFFVVAMCIGYTFLRAMVFFMAIVVAYVPEGLLATVTVCLSLTAKRLASKNCVVKNLEAVETLGSTSVICSDKTGTLTQNRMTVSHLWFDNHIHTADTTEDQSGQTFDQSSETWRALCRVLTLCNRAAFKSGQDAVPVPKRIVIGDASETALLKFSELTLGNAMGYRDRFPKVCEIPFNSINKFQLSIHTLEDPRDSRHLLVMKGAPERVLERCSSILIKGQELPLDEQWREAFQTAYLSLGGLGERVLGFCQLYLNEKDYPPGYAFDVEAMNFPSSGLCFAGLVSMIDPPRATVPDAVLKCRTAGIRVIMVTGDHPITAKAIAASVGIISEGSETVEDIAARLRMPVDQVNRKDARACVINGMQLKDMDPSELVEALRTHPEMVFARTSPQQKLVIVESCQRLGAIVAVTGDGVNDSPALKKADIGVAMGIAGSDAAKNAADMILLDDNFASIVTGVEQGRLIFDNLKKSIAYTLTKNIPELTPYLIYITVSVPLPLGCITILFIELCTDIFPSVSLAYEKAESDIMHLRPRNPKRDRLVNEPLAAYSYFQIGAIQSFAGFADYFTAMAQEGWFPLLCVGLRPQWEDHHLQDLQDSYGQEWTFGQRLYQQYTCYTVFFISIEMCQIADVLIRKTRRLSVFQQGFFRNKILVIAIVFQVCIGCFLCYCPGMPNIFNFMPIRFQWWLVPMPFGLLIFVYDEIRKLGVRCCPGSWWDQELYY.

Residues 1 to 97 (MGKAENYELY…NALRPPRGTP (97 aa)) are Cytoplasmic-facing. 2 positions are modified to phosphotyrosine: Tyr7 and Tyr10. A disordered region spans residues 14 to 41 (LGSGPGGDMTAKMSKKKAGGGGGKKKEK). Basic residues predominate over residues 26–39 (MSKKKAGGGGGKKK). At Ser27 the chain carries Phosphoserine. Residues 98-118 (EYVKFARQLAGGLQCLMWVAA) traverse the membrane as a helical segment. The Lumenal portion of the chain corresponds to 119–141 (AICLIAFAIQASEGDLTTDDNLY). The helical transmembrane segment at 142-162 (LAVALIAVVVVTGCFGYYQEF) threads the bilayer. Residues 163–298 (KSTNIIASFK…NEKTPIAIEI (136 aa)) lie on the Cytoplasmic side of the membrane. Residues 299–318 (EHFVDIIAGLAILFGATFFV) traverse the membrane as a helical segment. Residues 319 to 330 (VAMCIGYTFLRA) are Lumenal-facing. Residues 331 to 348 (MVFFMAIVVAYVPEGLLA) form a helical membrane-spanning segment. 4 residues coordinate K(+): Val339, Ala340, Val342, and Glu344. Residues 349-782 (TVTVCLSLTA…EQGRLIFDNL (434 aa)) lie on the Cytoplasmic side of the membrane. The active-site 4-aspartylphosphate intermediate is the Asp386. Mg(2+) is bound by residues Asp386 and Thr388. Residues Ser462 and Ser600 each carry the phosphoserine modification. Mg(2+)-binding residues include Asp727 and Asp731. The chain crosses the membrane as a helical span at residues 783–802 (KKSIAYTLTKNIPELTPYLI). Glu796 provides a ligand contact to K(+). The Lumenal segment spans residues 803–812 (YITVSVPLPL). A helical membrane pass occupies residues 813–833 (GCITILFIELCTDIFPSVSLA). A K(+)-binding site is contributed by Glu821. At 834–853 (YEKAESDIMHLRPRNPKRDR) the chain is on the cytoplasmic side. A Phosphoserine modification is found at Ser839. A helical transmembrane segment spans residues 854-876 (LVNEPLAAYSYFQIGAIQSFAGF). The Lumenal segment spans residues 877-928 (ADYFTAMAQEGWFPLLCVGLRPQWEDHHLQDLQDSYGQEWTFGQRLYQQYTC). The chain crosses the membrane as a helical span at residues 929–948 (YTVFFISIEMCQIADVLIRK). Topologically, residues 949 to 962 (TRRLSVFQQGFFRN) are cytoplasmic. Ser953 is modified (phosphoserine; by PKA). The helical transmembrane segment at 963–981 (KILVIAIVFQVCIGCFLCY) threads the bilayer. At 982-996 (CPGMPNIFNFMPIRF) the chain is on the lumenal side. Residues 997–1017 (QWWLVPMPFGLLIFVYDEIRK) traverse the membrane as a helical segment. Over 1018–1034 (LGVRCCPGSWWDQELYY) the chain is Cytoplasmic.

This sequence belongs to the cation transport ATPase (P-type) (TC 3.A.3) family. Type IIC subfamily. In terms of assembly, the gastric H(+)/K(+) ATPase pump is composed of the catalytic alpha subunit ATP4A and the regulatory beta subunit ATP4B. Interacts (via the P-domain) with ATP4B (via N-terminus); this interaction stabilizes the lumenal-open E2 conformation state and prevents the reverse reaction of the transport cycle. As to expression, expressed in parietal cells (at protein level).

The protein localises to the apical cell membrane. The catalysed reaction is K(+)(out) + ATP + H2O + H(+)(in) = K(+)(in) + ADP + phosphate + 2 H(+)(out). In terms of biological role, the catalytic subunit of the gastric H(+)/K(+) ATPase pump which transports H(+) ions in exchange for K(+) ions across the apical membrane of parietal cells. Uses ATP as an energy source to pump H(+) ions to the gastric lumen while transporting K(+) ion from the lumen into the cell. Remarkably generates a million-fold proton gradient across the gastric parietal cell membrane, acidifying the gastric juice down to pH 1. Within a transport cycle, the transfer of a H(+) ion across the membrane is coupled to ATP hydrolysis and is associated with a transient phosphorylation that shifts the pump conformation from inward-facing (E1) to outward-facing state (E2). The release of the H(+) ion in the stomach lumen is followed by binding of K(+) ion converting the pump conformation back to the E1 state. This Mus musculus (Mouse) protein is Potassium-transporting ATPase alpha chain 1.